A 70-amino-acid polypeptide reads, in one-letter code: Cytochrome c oxidase subunit 8B, mitochondrial (70 aa).

The transit peptide at 1–24 (MPRLPPALRLLQPPLRCWVVPKLH) directs the protein to the mitochondrion. Residues 25–35 (VSAKPARTPTS) are Mitochondrial matrix-facing. A helical transmembrane segment spans residues 36–59 (PAEQAVGLSMMFLSFLVPAGWVLS). Over 60 to 70 (HLESYKKSSTA) the chain is Mitochondrial intermembrane.

This sequence belongs to the cytochrome c oxidase VIII family. In terms of assembly, component of the cytochrome c oxidase (complex IV, CIV), a multisubunit enzyme composed of 14 subunits. The complex is composed of a catalytic core of 3 subunits MT-CO1, MT-CO2 and MT-CO3, encoded in the mitochondrial DNA, and 11 supernumerary subunits COX4I, COX5A, COX5B, COX6A, COX6B, COX6C, COX7A, COX7B, COX7C, COX8 and NDUFA4, which are encoded in the nuclear genome. The complex exists as a monomer or a dimer and forms supercomplexes (SCs) in the inner mitochondrial membrane with NADH-ubiquinone oxidoreductase (complex I, CI) and ubiquinol-cytochrome c oxidoreductase (cytochrome b-c1 complex, complex III, CIII), resulting in different assemblies (supercomplex SCI(1)III(2)IV(1) and megacomplex MCI(2)III(2)IV(2)).

It localises to the mitochondrion inner membrane. It functions in the pathway energy metabolism; oxidative phosphorylation. Component of the cytochrome c oxidase, the last enzyme in the mitochondrial electron transport chain which drives oxidative phosphorylation. The respiratory chain contains 3 multisubunit complexes succinate dehydrogenase (complex II, CII), ubiquinol-cytochrome c oxidoreductase (cytochrome b-c1 complex, complex III, CIII) and cytochrome c oxidase (complex IV, CIV), that cooperate to transfer electrons derived from NADH and succinate to molecular oxygen, creating an electrochemical gradient over the inner membrane that drives transmembrane transport and the ATP synthase. Cytochrome c oxidase is the component of the respiratory chain that catalyzes the reduction of oxygen to water. Electrons originating from reduced cytochrome c in the intermembrane space (IMS) are transferred via the dinuclear copper A center (CU(A)) of subunit 2 and heme A of subunit 1 to the active site in subunit 1, a binuclear center (BNC) formed by heme A3 and copper B (CU(B)). The BNC reduces molecular oxygen to 2 water molecules using 4 electrons from cytochrome c in the IMS and 4 protons from the mitochondrial matrix. This chain is Cytochrome c oxidase subunit 8B, mitochondrial (COX8B), found in Eulemur fulvus fulvus (Brown lemur).